The following is a 302-amino-acid chain: Homoserine kinase (302 aa).

Residue 90-100 (KPGSGLGSSSA) participates in ATP binding.

This sequence belongs to the GHMP kinase family. Homoserine kinase subfamily.

It localises to the cytoplasm. The enzyme catalyses L-homoserine + ATP = O-phospho-L-homoserine + ADP + H(+). It functions in the pathway amino-acid biosynthesis; L-threonine biosynthesis; L-threonine from L-aspartate: step 4/5. Catalyzes the ATP-dependent phosphorylation of L-homoserine to L-homoserine phosphate. The protein is Homoserine kinase of Methanococcus vannielii (strain ATCC 35089 / DSM 1224 / JCM 13029 / OCM 148 / SB).